The sequence spans 271 residues: Acetyl-coenzyme A carboxylase carboxyl transferase subunit beta (271 aa).

Residues 21–271 enclose the CoA carboxyltransferase N-terminal domain; the sequence is LWIQCPYCKQ…LGDLLALHTA (251 aa). Cys25, Cys28, Cys43, and Cys46 together coordinate Zn(2+). The segment at 25–46 adopts a C4-type zinc-finger fold; that stretch reads CPYCKQGSYRESLGNAQVCPHC.

The protein belongs to the AccD/PCCB family. As to quaternary structure, acetyl-CoA carboxylase is a heterohexamer composed of biotin carboxyl carrier protein (AccB), biotin carboxylase (AccC) and two subunits each of ACCase subunit alpha (AccA) and ACCase subunit beta (AccD). The cofactor is Zn(2+).

The protein localises to the cytoplasm. It catalyses the reaction N(6)-carboxybiotinyl-L-lysyl-[protein] + acetyl-CoA = N(6)-biotinyl-L-lysyl-[protein] + malonyl-CoA. It participates in lipid metabolism; malonyl-CoA biosynthesis; malonyl-CoA from acetyl-CoA: step 1/1. Its function is as follows. Component of the acetyl coenzyme A carboxylase (ACC) complex. Biotin carboxylase (BC) catalyzes the carboxylation of biotin on its carrier protein (BCCP) and then the CO(2) group is transferred by the transcarboxylase to acetyl-CoA to form malonyl-CoA. The chain is Acetyl-coenzyme A carboxylase carboxyl transferase subunit beta from Lacticaseibacillus paracasei (strain ATCC 334 / BCRC 17002 / CCUG 31169 / CIP 107868 / KCTC 3260 / NRRL B-441) (Lactobacillus paracasei).